A 251-amino-acid polypeptide reads, in one-letter code: tRNA (guanine-N(1)-)-methyltransferase (251 aa).

Residues G113 and 133 to 138 (IGDYVL) each bind S-adenosyl-L-methionine.

Belongs to the RNA methyltransferase TrmD family. Homodimer.

The protein localises to the cytoplasm. The enzyme catalyses guanosine(37) in tRNA + S-adenosyl-L-methionine = N(1)-methylguanosine(37) in tRNA + S-adenosyl-L-homocysteine + H(+). In terms of biological role, specifically methylates guanosine-37 in various tRNAs. The sequence is that of tRNA (guanine-N(1)-)-methyltransferase from Pectobacterium atrosepticum (strain SCRI 1043 / ATCC BAA-672) (Erwinia carotovora subsp. atroseptica).